Reading from the N-terminus, the 149-residue chain is Transcriptional repressor NrdR (149 aa).

A zinc finger lies at C3–C34. The 91-residue stretch at P49 to E139 folds into the ATP-cone domain.

The protein belongs to the NrdR family. It depends on Zn(2+) as a cofactor.

Functionally, negatively regulates transcription of bacterial ribonucleotide reductase nrd genes and operons by binding to NrdR-boxes. This chain is Transcriptional repressor NrdR, found in Shewanella halifaxensis (strain HAW-EB4).